A 195-amino-acid chain; its full sequence is Imidazoleglycerol-phosphate dehydratase (195 aa).

It belongs to the imidazoleglycerol-phosphate dehydratase family.

Its subcellular location is the cytoplasm. It carries out the reaction D-erythro-1-(imidazol-4-yl)glycerol 3-phosphate = 3-(imidazol-4-yl)-2-oxopropyl phosphate + H2O. Its pathway is amino-acid biosynthesis; L-histidine biosynthesis; L-histidine from 5-phospho-alpha-D-ribose 1-diphosphate: step 6/9. This chain is Imidazoleglycerol-phosphate dehydratase, found in Koribacter versatilis (strain Ellin345).